The primary structure comprises 607 residues: MLSYISAAFQSPSPDEGVQQRPPRYVGEDTTPTSRREILGWYSYGIAAEVFAVCGVGSFLPLTLEQLARERGTLQTSRLPCVGPSAGNSTNATEHGQCVVPVFGLEINTASFAMYTFSLAVLIQALTLISFSALADYENNRKTLLMVFGFAGALASMLFVFIAPPLFVIGSILVVVGVTCLGSSFVVLNSYLPVLVANDPSLQEGKADDGTEMSSFDRDEGDSEGNPWGKDHTDNDSLDGLQPSDQPQSSLEGGMGTKAPLSSSPELQLSTKISSRGIGLGYCAAVFVQIISIIMLLTLSKTKLAKVSATLPMRFVLLLVGIWWGAFTLVTRNLLKTRPGPRLDTVSTKGTGRWRAWLRLVGFAWKSLWETVKVVSKLREVLIFLVAWFLLSDAMATVSGTAILFARTELKLSTPLIGLLSITATLSGMTGAFLWPQVSRYFRLQPSHTIILCIALFEMIPLYGLLAYIPFIKNWGVFGLQQPWEIFPLAIVHGVVSGGLASYCRSFFGLLIPPGSEAAFYALYAATDKGSSFIGPAIVGGIVDATGQIRSGFFFMAILIVLPIPLVWMVNADKGRREGLAMAETLGKSHGGPAEDAQEAEGLLARE.

Positions 9 to 31 are disordered; the sequence is FQSPSPDEGVQQRPPRYVGEDTT. A helical transmembrane segment spans residues 44–64; it reads YGIAAEVFAVCGVGSFLPLTL. Residues asparagine 88 and asparagine 91 are each glycosylated (N-linked (GlcNAc...) asparagine). The next 3 membrane-spanning stretches (helical) occupy residues 111–131, 143–160, and 161–178; these read SFAM…LISF, TLLM…MLFV, and FIAP…VVGV. The tract at residues 203-263 is disordered; it reads QEGKADDGTE…GMGTKAPLSS (61 aa). Residue asparagine 235 is glycosylated (N-linked (GlcNAc...) asparagine). Transmembrane regions (helical) follow at residues 277–297, 310–330, 381–401, 415–435, 450–470, 484–504, 521–543, and 552–572; these read GIGL…IMLL, TLPM…FTLV, VLIF…VSGT, PLIG…AFLW, IILC…AYIP, WEIF…ASYC, YALY…GGIV, and GFFF…MVNA. Positions 585–607 are disordered; sequence TLGKSHGGPAEDAQEAEGLLARE.

It belongs to the ATG22 family.

It is found in the vacuole membrane. Functionally, vacuolar effluxer which mediate the efflux of amino acids resulting from autophagic degradation. The release of autophagic amino acids allows the maintenance of protein synthesis and viability during nitrogen starvation. The chain is Autophagy-related protein 22-2 (atg22-2) from Penicillium rubens (strain ATCC 28089 / DSM 1075 / NRRL 1951 / Wisconsin 54-1255) (Penicillium chrysogenum).